The sequence spans 138 residues: Flagellar basal body rod protein FlgB (138 aa).

The protein belongs to the flagella basal body rod proteins family. As to quaternary structure, the basal body constitutes a major portion of the flagellar organelle and consists of a number of rings mounted on a central rod. In Gram-negative bacteria, at least four rings, L, P, S and M are present, whereas Gram-positive bacteria lack the L and P rings. The rod consists of about 26 subunits of FlgG in the distal portion, and FlgB, FlgC and FlgF build up the proximal portion of the rod with about 6 subunits each. Rod assembly occurs by export via the flagellum-specific pathway of its constituent proteins and by their incorporation into the rod structure in the probable order of FlgB, FlgC, FlgF and FlgG. Another protein, FliE, also assembles onto the stable rod structure. Interacts with FliE and peptidoglycan hydrolase FlgJ (via N-terminus), which seems to function as a scaffold or cap for rod assembly.

It is found in the bacterial flagellum basal body. Structural component of flagellum, the bacterial motility apparatus. Part of the rod structure of flagellar basal body. This chain is Flagellar basal body rod protein FlgB (flgB), found in Salmonella typhimurium (strain LT2 / SGSC1412 / ATCC 700720).